The chain runs to 111 residues: Integration host factor subunit alpha (111 aa).

The protein belongs to the bacterial histone-like protein family. In terms of assembly, heterodimer of an alpha and a beta chain.

In terms of biological role, this protein is one of the two subunits of integration host factor, a specific DNA-binding protein that functions in genetic recombination as well as in transcriptional and translational control. In Polaromonas sp. (strain JS666 / ATCC BAA-500), this protein is Integration host factor subunit alpha.